The chain runs to 430 residues: Adenylosuccinate synthetase (430 aa).

GTP contacts are provided by residues 12–18 and 40–42; these read GDEGKGK and GHT. Residue aspartate 13 is the Proton acceptor of the active site. The Mg(2+) site is built by aspartate 13 and glycine 40. Residues 13–16, 38–41, threonine 128, arginine 142, glutamine 223, threonine 238, and arginine 302 each bind IMP; these read DEGK and NAGH. Histidine 41 serves as the catalytic Proton donor. 298-304 provides a ligand contact to substrate; that stretch reads TTTGRPR. Residues arginine 304, 330–332, and 412–414 each bind GTP; these read LLD and SVG.

It belongs to the adenylosuccinate synthetase family. Homodimer. Requires Mg(2+) as cofactor.

The protein resides in the cytoplasm. The catalysed reaction is IMP + L-aspartate + GTP = N(6)-(1,2-dicarboxyethyl)-AMP + GDP + phosphate + 2 H(+). It functions in the pathway purine metabolism; AMP biosynthesis via de novo pathway; AMP from IMP: step 1/2. Its function is as follows. Plays an important role in the de novo pathway of purine nucleotide biosynthesis. Catalyzes the first committed step in the biosynthesis of AMP from IMP. The chain is Adenylosuccinate synthetase from Listeria monocytogenes serotype 4b (strain CLIP80459).